The following is a 142-amino-acid chain: Large ribosomal subunit protein uL13 (142 aa).

Belongs to the universal ribosomal protein uL13 family. As to quaternary structure, part of the 50S ribosomal subunit.

Functionally, this protein is one of the early assembly proteins of the 50S ribosomal subunit, although it is not seen to bind rRNA by itself. It is important during the early stages of 50S assembly. The polypeptide is Large ribosomal subunit protein uL13 (Alkalilimnicola ehrlichii (strain ATCC BAA-1101 / DSM 17681 / MLHE-1)).